The sequence spans 202 residues: LexA repressor (202 aa).

A DNA-binding region (H-T-H motif) is located at residues 28–48; the sequence is RAEIAQRLGFRSPNAAEEHLK. Catalysis depends on for autocatalytic cleavage activity residues S119 and K156.

Belongs to the peptidase S24 family. As to quaternary structure, homodimer.

It catalyses the reaction Hydrolysis of Ala-|-Gly bond in repressor LexA.. In terms of biological role, represses a number of genes involved in the response to DNA damage (SOS response), including recA and lexA. Binds to the 16 bp palindromic sequence 5'-CTGTATATATATACAG-3'. In the presence of single-stranded DNA, RecA interacts with LexA causing an autocatalytic cleavage which disrupts the DNA-binding part of LexA, leading to derepression of the SOS regulon and eventually DNA repair. The sequence is that of LexA repressor from Citrobacter koseri (strain ATCC BAA-895 / CDC 4225-83 / SGSC4696).